The chain runs to 349 residues: Glycerol-3-phosphate dehydrogenase [NAD(+)], cytoplasmic (349 aa).

NAD(+) is bound at residue 10–15 (GSGNWG). K120 is a substrate binding site. A153 serves as a coordination point for NAD(+). The residue at position 154 (S154) is a Phosphoserine. Residue K204 is the Proton acceptor of the active site. NAD(+) is bound at residue R269. Residue 269–270 (RN) participates in substrate binding. K289 is subject to N6-succinyllysine. NAD(+) is bound by residues K296 and Q298. A Phosphotyrosine modification is found at Y326.

Belongs to the NAD-dependent glycerol-3-phosphate dehydrogenase family. In terms of assembly, homodimer.

The protein localises to the cytoplasm. The enzyme catalyses sn-glycerol 3-phosphate + NAD(+) = dihydroxyacetone phosphate + NADH + H(+). Has glycerol-3-phosphate dehydrogenase activity. This Pongo abelii (Sumatran orangutan) protein is Glycerol-3-phosphate dehydrogenase [NAD(+)], cytoplasmic (GPD1).